The primary structure comprises 550 residues: MVRGWEPPPGLDCAISEGHKSEGTMPPNKEASGLSSSPAGLICLPPISEELQLVWTQAAQTSELDSNEHLLKTFSYFPYPSLADIALLCLRYGLQMEKVKTWFMAQRLRCGISWSSEEIEETRARVVYRRDQLHFKSLLSFTHHAGRPPEEVPPPPVPAPEQVGIGIGPPTLSKPTQTKGLKVEPEEPSQMPPLPQSHQKLKESLMTPGSGAFPYQSDFWQHLQSSGLSKEQAGRGPNQSHGIGTASWNHSTTVPQPQARDKPPPIALIASSCKEESASSVTPSSSSTSSSFQVLANGATAASKPLQPLGCVPQSVSPSEQALPPHLEPAWPQGLRHNSVPGRVGPTEYLSPDMQRQRKTKRKTKEQLAILKSFFLQCQWARREDYQKLEQITGLPRPEIIQWFGDTRYALKHGQLKWFRDNAVPGAPSFQDPAIPTPPPSTRSLNERAETPPLPIPPPPPDIQPLERYWAAHQQLRETDIPQLSQASRLSTQQVLDWFDSRLPQPAEVVVCLDEEEEEEEEELPEDDEEEEEEEEEDDDDDDDDVIIQD.

Residues 1-10 (MVRGWEPPPG) show a composition bias toward pro residues. Residues 1–36 (MVRGWEPPPGLDCAISEGHKSEGTMPPNKEASGLSS) are disordered. A DNA-binding region (homeobox 1) is located at residues 55 to 114 (WTQAAQTSELDSNEHLLKTFSYFPYPSLADIALLCLRYGLQMEKVKTWFMAQRLRCGISW). The segment at 168-199 (GPPTLSKPTQTKGLKVEPEEPSQMPPLPQSHQ) is disordered. Glycyl lysine isopeptide (Lys-Gly) (interchain with G-Cter in SUMO2) cross-links involve residues Lys182, Lys200, and Lys202. Residues 223–265 (LQSSGLSKEQAGRGPNQSHGIGTASWNHSTTVPQPQARDKPPP) are disordered. The span at 237–256 (PNQSHGIGTASWNHSTTVPQ) shows a compositional bias: polar residues. At Ser351 the chain carries Phosphoserine. DNA-binding regions (homeobox) lie at residues 355–415 (QRQR…KHGQ) and 451–510 (TPPL…AEVV). The short motif at 358 to 363 (RKTKRK) is the Nuclear localization signal element. Disordered stretches follow at residues 424–465 (VPGA…DIQP) and 512–550 (CLDE…IIQD). A Phosphothreonine modification is found at Thr451. The segment covering 452–463 (PPLPIPPPPPDI) has biased composition (pro residues). The segment covering 513 to 550 (LDEEEEEEEEELPEDDEEEEEEEEEDDDDDDDDVIIQD) has biased composition (acidic residues).

As to quaternary structure, homodimer or heterodimer (Potential). Interacts with HOXC8. As to expression, ubiquitous. Strongly expressed in adult testis and kidney as well as fetal lung and kidney.

Its subcellular location is the nucleus. In terms of biological role, may function as a transcriptional regulator. This is Homeobox and leucine zipper protein Homez (HOMEZ) from Homo sapiens (Human).